Consider the following 342-residue polypeptide: Acetoin:2,6-dichlorophenolindophenol oxidoreductase subunit beta (342 aa).

In terms of assembly, tetramer of 2 alpha and 2 beta subunits.

The protein operates within ketone degradation; acetoin degradation. Catalyzes the 2,6-dichlorophenolindophenol-dependent cleavage of acetoin into acetate and acetaldehyde. This chain is Acetoin:2,6-dichlorophenolindophenol oxidoreductase subunit beta (acoB), found in Bacillus subtilis (strain 168).